A 64-amino-acid polypeptide reads, in one-letter code: Large ribosomal subunit protein bL32 (64 aa).

Basic residues predominate over residues 1–10; it reads MAVPKRKTTP. The disordered stretch occupies residues 1 to 22; that stretch reads MAVPKRKTTPSKRDMRRANHDK. Positions 11–22 are enriched in basic and acidic residues; it reads SKRDMRRANHDK.

It belongs to the bacterial ribosomal protein bL32 family.

This Sorangium cellulosum (strain So ce56) (Polyangium cellulosum (strain So ce56)) protein is Large ribosomal subunit protein bL32.